A 306-amino-acid chain; its full sequence is uncharacterized protein (306 aa).

Helical transmembrane passes span 6–26, 37–57, 67–87, 91–111, 125–145, 148–168, 177–197, 213–233, and 251–271; these read VQIM…FPGI, HLAL…AVLT, IPAI…LLNI, TVSA…SAML, WLGS…AGDF, SMSG…YFVF, GFIP…LVFL, LSIV…LAYV, and ALAL…LSLL. EamA domains lie at 17–140 and 160–285; these read GLWA…LIAF and FSES…FTYL.

This sequence belongs to the EamA transporter family.

It is found in the cell membrane. This is an uncharacterized protein from Bacillus subtilis (strain 168).